The chain runs to 133 residues: Ribosome-binding factor A (133 aa).

It belongs to the RbfA family. As to quaternary structure, monomer. Binds 30S ribosomal subunits, but not 50S ribosomal subunits or 70S ribosomes.

Its subcellular location is the cytoplasm. In terms of biological role, one of several proteins that assist in the late maturation steps of the functional core of the 30S ribosomal subunit. Associates with free 30S ribosomal subunits (but not with 30S subunits that are part of 70S ribosomes or polysomes). Required for efficient processing of 16S rRNA. May interact with the 5'-terminal helix region of 16S rRNA. This chain is Ribosome-binding factor A, found in Nostoc sp. (strain PCC 7120 / SAG 25.82 / UTEX 2576).